The chain runs to 421 residues: UDP-N-acetylglucosamine 1-carboxyvinyltransferase 2 (421 aa).

22 to 23 (KN) is a binding site for phosphoenolpyruvate. Residue Arg95 participates in UDP-N-acetyl-alpha-D-glucosamine binding. Cys119 (proton donor) is an active-site residue. Cys119 is subject to 2-(S-cysteinyl)pyruvic acid O-phosphothioketal. UDP-N-acetyl-alpha-D-glucosamine-binding positions include 124-128 (RPIEQ), Asp308, and Val330.

The protein belongs to the EPSP synthase family. MurA subfamily.

The protein localises to the cytoplasm. It carries out the reaction phosphoenolpyruvate + UDP-N-acetyl-alpha-D-glucosamine = UDP-N-acetyl-3-O-(1-carboxyvinyl)-alpha-D-glucosamine + phosphate. Its pathway is cell wall biogenesis; peptidoglycan biosynthesis. In terms of biological role, cell wall formation. Adds enolpyruvyl to UDP-N-acetylglucosamine. The chain is UDP-N-acetylglucosamine 1-carboxyvinyltransferase 2 from Staphylococcus saprophyticus subsp. saprophyticus (strain ATCC 15305 / DSM 20229 / NCIMB 8711 / NCTC 7292 / S-41).